Here is a 377-residue protein sequence, read N- to C-terminus: Short chain dehydrogenase gsfE (377 aa).

5 residues coordinate NADP(+): Asp89, Gln121, Tyr226, Ala266, and Ser268. The Proton donor role is filled by Tyr226.

Belongs to the short-chain dehydrogenases/reductases (SDR) family. Highly divergent.

It catalyses the reaction dehydrogriseofulvin + NADPH + H(+) = griseofulvin + NADP(+). It participates in secondary metabolite biosynthesis; terpenoid biosynthesis. Its function is as follows. Short chain dehydrogenase; part of the gene cluster that mediates the biosynthesis of griseofulvin, an important antifungal drug that has been in use for a long time for treating dermatophyte infections. The first step of the pathway is the formation of the heptaketide backbone by gsfA which is initiated by priming with acetyl-CoA, followed by sequential condensations of 6 malonyl-CoA units. The resulting benzophenone can undergo a spontaneous dehydration to form norlichexanthone. However, the true precursor for the griseofulvin biosynthesis is not norlichexanthone, but the heptaketide benzophenone that is O-methylated at 3-OH by gsfB to produce griseophenone D which is further methylated at 9-OH by gsfC to yield griseophenone C. Griseophenone C is then substrate of halogenase gsfI which is responsible for the regio-specific chlorination at the C13 position to form griseophenone B. The cytochrome P450 gsfF catalyzes the coupling of orcinol and phloroglucinol rings in griseophenone B to form desmethyl-dehydrogriseofulvin A which is further methylated at 5-OH by gsfD to yield dehydrogriseofulvin. Finally, gsfE performs stereospecific reduction of enone 18 of dehydrogriseofulvin to afford the final product griseofulvin. The sequence is that of Short chain dehydrogenase gsfE from Penicillium aethiopicum.